A 275-amino-acid polypeptide reads, in one-letter code: Dermonecrotic toxin SpeSicTox-betaIIA1 (275 aa).

Residue His-5 is part of the active site. Positions 25 and 27 each coordinate Mg(2+). His-41 (nucleophile) is an active-site residue. Cystine bridges form between Cys-45–Cys-51 and Cys-47–Cys-190. Asp-85 provides a ligand contact to Mg(2+).

The protein belongs to the arthropod phospholipase D family. Class II subfamily. The cofactor is Mg(2+). Expressed by the venom gland.

Its subcellular location is the secreted. It catalyses the reaction an N-(acyl)-sphingosylphosphocholine = an N-(acyl)-sphingosyl-1,3-cyclic phosphate + choline. The enzyme catalyses an N-(acyl)-sphingosylphosphoethanolamine = an N-(acyl)-sphingosyl-1,3-cyclic phosphate + ethanolamine. It carries out the reaction a 1-acyl-sn-glycero-3-phosphocholine = a 1-acyl-sn-glycero-2,3-cyclic phosphate + choline. The catalysed reaction is a 1-acyl-sn-glycero-3-phosphoethanolamine = a 1-acyl-sn-glycero-2,3-cyclic phosphate + ethanolamine. Dermonecrotic toxins cleave the phosphodiester linkage between the phosphate and headgroup of certain phospholipids (sphingolipid and lysolipid substrates), forming an alcohol (often choline) and a cyclic phosphate. This toxin acts on sphingomyelin (SM). It may also act on ceramide phosphoethanolamine (CPE), lysophosphatidylcholine (LPC) and lysophosphatidylethanolamine (LPE), but not on lysophosphatidylserine (LPS), and lysophosphatidylglycerol (LPG). It acts by transphosphatidylation, releasing exclusively cyclic phosphate products as second products. Induces dermonecrosis, hemolysis, increased vascular permeability, edema, inflammatory response, and platelet aggregation. The protein is Dermonecrotic toxin SpeSicTox-betaIIA1 of Sicarius peruensis (Six-eyed sand spider).